The sequence spans 228 residues: Probable septum site-determining protein MinC (228 aa).

Belongs to the MinC family. Interacts with MinD and FtsZ.

Functionally, cell division inhibitor that blocks the formation of polar Z ring septums. Rapidly oscillates between the poles of the cell to destabilize FtsZ filaments that have formed before they mature into polar Z rings. Prevents FtsZ polymerization. In Symbiobacterium thermophilum (strain DSM 24528 / JCM 14929 / IAM 14863 / T), this protein is Probable septum site-determining protein MinC.